Reading from the N-terminus, the 568-residue chain is Probable pectinesterase/pectinesterase inhibitor 23 (568 aa).

Residues M1–S33 form the signal peptide. Residues R45–M198 are pectinesterase inhibitor 23. Residues N94, N210, and N316 are each glycosylated (N-linked (GlcNAc...) asparagine). Residues P251–D548 form a pectinesterase 23 region. Residues T333 and Q363 each contribute to the substrate site. The active-site Proton donor; for pectinesterase activity is D386. C400 and C420 are joined by a disulfide. D407 (nucleophile; for pectinesterase activity) is an active-site residue. The substrate site is built by R475 and W477.

The protein in the N-terminal section; belongs to the PMEI family. It in the C-terminal section; belongs to the pectinesterase family. Expressed in mature pollen grains in the anthers and on the stigma. Found in pollen tubes within the style.

The protein localises to the secreted. Its subcellular location is the cell wall. The enzyme catalyses [(1-&gt;4)-alpha-D-galacturonosyl methyl ester](n) + n H2O = [(1-&gt;4)-alpha-D-galacturonosyl](n) + n methanol + n H(+). The protein operates within glycan metabolism; pectin degradation; 2-dehydro-3-deoxy-D-gluconate from pectin: step 1/5. Acts in the modification of cell walls via demethylesterification of cell wall pectin. The chain is Probable pectinesterase/pectinesterase inhibitor 23 (PME23) from Arabidopsis thaliana (Mouse-ear cress).